We begin with the raw amino-acid sequence, 166 residues long: NAD(P)H-quinone oxidoreductase subunit I, chloroplastic (166 aa).

2 4Fe-4S ferredoxin-type domains span residues Gly-55–Lys-84 and Leu-95–Glu-124. Positions 64, 67, 70, 74, 104, 107, 110, and 114 each coordinate [4Fe-4S] cluster.

It belongs to the complex I 23 kDa subunit family. NDH is composed of at least 16 different subunits, 5 of which are encoded in the nucleus. Requires [4Fe-4S] cluster as cofactor.

It is found in the plastid. The protein localises to the chloroplast thylakoid membrane. It catalyses the reaction a plastoquinone + NADH + (n+1) H(+)(in) = a plastoquinol + NAD(+) + n H(+)(out). It carries out the reaction a plastoquinone + NADPH + (n+1) H(+)(in) = a plastoquinol + NADP(+) + n H(+)(out). NDH shuttles electrons from NAD(P)H:plastoquinone, via FMN and iron-sulfur (Fe-S) centers, to quinones in the photosynthetic chain and possibly in a chloroplast respiratory chain. The immediate electron acceptor for the enzyme in this species is believed to be plastoquinone. Couples the redox reaction to proton translocation, and thus conserves the redox energy in a proton gradient. The sequence is that of NAD(P)H-quinone oxidoreductase subunit I, chloroplastic from Lasianthaea macrocephala (Lipochaeta macrocephala).